The following is a 165-amino-acid chain: MEAESPKERVQGVSGESWDPERGVKEREDTSSKKGKGVDIPQVLVSQSCAARECAKDEIRKFTKVPVEIDTVGGKPLVFMMWASEEKPVHRKRLHAEASRDVFGCESCEEVFDSFKKLQLHKAQHKGTSTEPSNSLFCPVCKKTFDEKRKLMLHSRYHKIDKDGR.

2 stretches are compositionally biased toward basic and acidic residues: residues 1 to 10 (MEAESPKERV) and 19 to 32 (DPER…DTSS). The disordered stretch occupies residues 1-38 (MEAESPKERVQGVSGESWDPERGVKEREDTSSKKGKGV). 2 consecutive C2H2-type zinc fingers follow at residues 103–125 (FGCE…KAQH) and 136–158 (LFCP…SRYH).

In Encephalitozoon cuniculi (strain GB-M1) (Microsporidian parasite), this protein is Zinc finger C2H2 protein ECU11_0990.